A 99-amino-acid polypeptide reads, in one-letter code: Protein Tat (99 aa).

Residues 1–20 are disordered; sequence MELVDPNLDPWNHPGSQPTT. Residues 1–24 are interaction with human CREBBP; the sequence is MELVDPNLDPWNHPGSQPTTPCTR. The tract at residues 1–48 is transactivation; sequence MELVDPNLDPWNHPGSQPTTPCTRCYCKWCCFHCYWCFTTKGLGISYG. Residues Cys-22, Cys-25, and Cys-27 each contribute to the Zn(2+) site. Residues 22–37 are cysteine-rich; the sequence is CTRCYCKWCCFHCYWC. Lys-28 bears the N6-acetyllysine; by host PCAF mark. 4 residues coordinate Zn(2+): Cys-30, His-33, Cys-34, and Cys-37. The segment at 38–48 is core; it reads FTTKGLGISYG. The disordered stretch occupies residues 48 to 99; it reads GRKKRRQRPRTPQSSQIHQDFVPKQPISQARGNPTGPKESKKEVESKAKTDP. The Nuclear localization signal, RNA-binding (TAR), and protein transduction motif lies at 49 to 57; sequence RKKRRQRPR. An interaction with the host capping enzyme RNGTT region spans residues 49–86; that stretch reads RKKRRQRPRTPQSSQIHQDFVPKQPISQARGNPTGPKE. Residues Lys-50 and Lys-51 each carry the N6-acetyllysine; by host EP300 and GCN5L2 modification. 2 positions are modified to asymmetric dimethylarginine; by host PRMT6: Arg-52 and Arg-53. Lys-71 participates in a covalent cross-link: Glycyl lysine isopeptide (Lys-Gly) (interchain with G-Cter in ubiquitin). The span at 85 to 99 shows a compositional bias: basic and acidic residues; sequence KESKKEVESKAKTDP.

This sequence belongs to the lentiviruses Tat family. In terms of assembly, interacts with host CCNT1. Associates with the P-TEFb complex composed at least of Tat, P-TEFb (CDK9 and CCNT1), TAR RNA, RNA Pol II. Recruits the HATs CREBBP, TAF1/TFIID, EP300, PCAF and GCN5L2. Interacts with host KAT5/Tip60; this interaction targets the latter to degradation. Interacts with the host deacetylase SIRT1. Interacts with host capping enzyme RNGTT; this interaction stimulates RNGTT. Binds to host KDR, and to the host integrins ITGAV/ITGB3 and ITGA5/ITGB1. Interacts with host KPNB1/importin beta-1 without previous binding to KPNA1/importin alpha-1. Interacts with EIF2AK2. Interacts with host nucleosome assembly protein NAP1L1; this interaction may be required for the transport of Tat within the nucleus, since the two proteins interact at the nuclear rim. Interacts with host C1QBP/SF2P32; this interaction involves lysine-acetylated Tat. Interacts with the host chemokine receptors CCR2, CCR3 and CXCR4. Interacts with host DPP4/CD26; this interaction may trigger an anti-proliferative effect. Interacts with host LDLR. Interacts with the host extracellular matrix metalloproteinase MMP1. Interacts with host PRMT6; this interaction mediates Tat's methylation. Interacts with, and is ubiquitinated by MDM2/Hdm2. Interacts with host PSMC3 and HTATIP2. Interacts with STAB1; this interaction may overcome SATB1-mediated repression of IL2 and IL2RA (interleukin) in T cells by binding to the same domain than HDAC1. Interacts (when acetylated) with human CDK13, thereby increasing HIV-1 mRNA splicing and promoting the production of the doubly spliced HIV-1 protein Nef. Interacts with host TBP; this interaction modulates the activity of transcriptional pre-initiation complex. Interacts with host RELA. Interacts with host PLSCR1; this interaction negatively regulates Tat transactivation activity by altering its subcellular distribution. In terms of processing, asymmetrical arginine methylation by host PRMT6 seems to diminish the transactivation capacity of Tat and affects the interaction with host CCNT1. Post-translationally, acetylation by EP300, CREBBP, GCN5L2/GCN5 and PCAF regulates the transactivation activity of Tat. EP300-mediated acetylation of Lys-50 promotes dissociation of Tat from the TAR RNA through the competitive binding to PCAF's bromodomain. In addition, the non-acetylated Tat's N-terminus can also interact with PCAF. PCAF-mediated acetylation of Lys-28 enhances Tat's binding to CCNT1. Lys-50 is deacetylated by SIRT1. Polyubiquitination by host MDM2 does not target Tat to degradation, but activates its transactivation function and fosters interaction with CCNT1 and TAR RNA. In terms of processing, phosphorylated by EIF2AK2 on serine and threonine residues adjacent to the basic region important for TAR RNA binding and function. Phosphorylation of Tat by EIF2AK2 is dependent on the prior activation of EIF2AK2 by dsRNA.

It is found in the host nucleus. The protein localises to the host nucleolus. The protein resides in the host cytoplasm. Its subcellular location is the secreted. In terms of biological role, transcriptional activator that increases RNA Pol II processivity, thereby increasing the level of full-length viral transcripts. Recognizes a hairpin structure at the 5'-LTR of the nascent viral mRNAs referred to as the transactivation responsive RNA element (TAR) and recruits the cyclin T1-CDK9 complex (P-TEFb complex) that will in turn hyperphosphorylate the RNA polymerase II to allow efficient elongation. The CDK9 component of P-TEFb and other Tat-activated kinases hyperphosphorylate the C-terminus of RNA Pol II that becomes stabilized and much more processive. Other factors such as HTATSF1/Tat-SF1, SUPT5H/SPT5, and HTATIP2 are also important for Tat's function. Besides its effect on RNA Pol II processivity, Tat induces chromatin remodeling of proviral genes by recruiting the histone acetyltransferases (HATs) CREBBP, EP300 and PCAF to the chromatin. This also contributes to the increase in proviral transcription rate, especially when the provirus integrates in transcriptionally silent region of the host genome. To ensure maximal activation of the LTR, Tat mediates nuclear translocation of NF-kappa-B by interacting with host RELA. Through its interaction with host TBP, Tat may also modulate transcription initiation. Tat can reactivate a latently infected cell by penetrating in it and transactivating its LTR promoter. In the cytoplasm, Tat is thought to act as a translational activator of HIV-1 mRNAs. Extracellular circulating Tat can be endocytosed by surrounding uninfected cells via the binding to several surface receptors such as CD26, CXCR4, heparan sulfate proteoglycans (HSPG) or LDLR. Neurons are rarely infected, but they internalize Tat via their LDLR. Through its interaction with nuclear HATs, Tat is potentially able to control the acetylation-dependent cellular gene expression. Modulates the expression of many cellular genes involved in cell survival, proliferation or in coding for cytokines or cytokine receptors. Tat plays a role in T-cell and neurons apoptosis. Tat induced neurotoxicity and apoptosis probably contribute to neuroAIDS. Circulating Tat also acts as a chemokine-like and/or growth factor-like molecule that binds to specific receptors on the surface of the cells, affecting many cellular pathways. In the vascular system, Tat binds to ITGAV/ITGB3 and ITGA5/ITGB1 integrins dimers at the surface of endothelial cells and competes with bFGF for heparin-binding sites, leading to an excess of soluble bFGF. This Homo sapiens (Human) protein is Protein Tat.